The primary structure comprises 398 residues: Acetate kinase (398 aa).

Asn8 provides a ligand contact to Mg(2+). Lys15 is a binding site for ATP. Arg89 is a binding site for substrate. Residue Asp146 is the Proton donor/acceptor of the active site. Residues 206 to 210 (HIGNG), 283 to 285 (DMR), and 331 to 335 (GMGEN) each bind ATP. Glu383 lines the Mg(2+) pocket.

It belongs to the acetokinase family. As to quaternary structure, homodimer. Mg(2+) serves as cofactor. Requires Mn(2+) as cofactor.

The protein resides in the cytoplasm. It carries out the reaction acetate + ATP = acetyl phosphate + ADP. Its pathway is metabolic intermediate biosynthesis; acetyl-CoA biosynthesis; acetyl-CoA from acetate: step 1/2. In terms of biological role, catalyzes the formation of acetyl phosphate from acetate and ATP. Can also catalyze the reverse reaction. The sequence is that of Acetate kinase from Streptococcus pyogenes serotype M4 (strain MGAS10750).